The sequence spans 469 residues: Dihydrolipoyl dehydrogenase (469 aa).

Residues 40-48 (EKAVLGGVC), Lys-57, and Ala-120 each bind FAD. Cys-48 and Cys-53 form a disulfide bridge. Residues 186-190 (GGGAI), Glu-209, and 275-278 (AVGV) contribute to the NAD(+) site. The FAD site is built by Asp-317 and Ala-325. His-450 serves as the catalytic Proton acceptor.

This sequence belongs to the class-I pyridine nucleotide-disulfide oxidoreductase family. Homodimer. The cofactor is FAD.

The protein localises to the cytoplasm. The catalysed reaction is N(6)-[(R)-dihydrolipoyl]-L-lysyl-[protein] + NAD(+) = N(6)-[(R)-lipoyl]-L-lysyl-[protein] + NADH + H(+). Its function is as follows. Lipoamide dehydrogenase is a component of the alpha-ketoacid dehydrogenase complexes. The polypeptide is Dihydrolipoyl dehydrogenase (lpd) (Chlorobaculum tepidum (strain ATCC 49652 / DSM 12025 / NBRC 103806 / TLS) (Chlorobium tepidum)).